Reading from the N-terminus, the 494-residue chain is NADPH:adrenodoxin oxidoreductase, mitochondrial (494 aa).

Residues 1 to 34 (MAPRCWHWWRWSAWSGLRPSPSRSTPTPGFCQKF) constitute a mitochondrion transit peptide. Residues Ala51, Glu72, Leu80, and Val116 each coordinate FAD. Residues 187–190 (QGNV), 231–232 (RR), and Glu243 each bind NADP(+). Position 313 is a phosphoserine (Ser313). Residues Trp401 and 408-410 (GVI) contribute to the FAD site. NADP(+) is bound at residue Gly408.

It belongs to the ferredoxin--NADP reductase type 1 family. As to quaternary structure, monomer. Interacts directly with FDX1. The cofactor is FAD. In terms of tissue distribution, expressed in the adrenal, testis and ovary and to a lesser extent in the liver and kidney.

The protein resides in the mitochondrion inner membrane. It catalyses the reaction 2 reduced [adrenodoxin] + NADP(+) + H(+) = 2 oxidized [adrenodoxin] + NADPH. The catalysed reaction is 2 reduced [2Fe-2S]-[ferredoxin] + NADP(+) + H(+) = 2 oxidized [2Fe-2S]-[ferredoxin] + NADPH. It participates in steroid metabolism; cholesterol metabolism. In terms of biological role, serves as the first electron transfer protein in all the mitochondrial P450 systems including cholesterol side chain cleavage in all steroidogenic tissues, steroid 11-beta hydroxylation in the adrenal cortex, 25-OH-vitamin D3-24 hydroxylation in the kidney, and sterol C-27 hydroxylation in the liver. Also acts as a ferredoxin--NADP(+) reductase essential for coenzyme Q biosynthesis: together with FDX2, transfers the electrons required for the hydroxylation reaction performed by COQ6. The polypeptide is NADPH:adrenodoxin oxidoreductase, mitochondrial (Fdxr) (Mus musculus (Mouse)).